The following is a 52-amino-acid chain: Large ribosomal subunit protein bL32c (52 aa).

The protein belongs to the bacterial ribosomal protein bL32 family.

It localises to the plastid. The protein localises to the chloroplast. The protein is Large ribosomal subunit protein bL32c of Nymphaea alba (White water-lily).